Reading from the N-terminus, the 239-residue chain is MGHKVHPIGIRLGISADWNSKWYANKAEFARYLAADLKVRQVLRKKMSQAGISKILIERPSNTACVSMHVARPGVVIGKRGEDIEMLRKQVSDIMGVPVHINVIEVRKPELDAQLVAESVAQQLERRIMFRRAMKRSVSNAIRLGALGIKISVAGRLNGAEIARSEWYREGRVPLQTLRADIGYGFSEAYTNYGVTGVKVLMYHGDIFSFSSVSQEKQDDGSRGDRNADRSSRRSREVR.

The region spanning 39-107 (VRQVLRKKMS…PVHINVIEVR (69 aa)) is the KH type-2 domain. Residues 214 to 239 (SQEKQDDGSRGDRNADRSSRRSREVR) are disordered. The segment covering 216–239 (EKQDDGSRGDRNADRSSRRSREVR) has biased composition (basic and acidic residues).

Belongs to the universal ribosomal protein uS3 family. Part of the 30S ribosomal subunit. Forms a tight complex with proteins S10 and S14.

Functionally, binds the lower part of the 30S subunit head. Binds mRNA in the 70S ribosome, positioning it for translation. This chain is Small ribosomal subunit protein uS3, found in Xylella fastidiosa (strain M23).